Reading from the N-terminus, the 113-residue chain is Dolichyl-diphosphooligosaccharide--protein glycosyltransferase subunit DAD1 (113 aa).

An N-acetylserine modification is found at Ser2. Residues 2-30 (SASVVSVISRFLEEYLSSTPQRLKLLDAY) lie on the Cytoplasmic side of the membrane. A helical membrane pass occupies residues 31 to 51 (LLYILLTGALQFGYCLLVGTF). Position 52 (Pro52) is a topological domain, lumenal. Residues 53–73 (FNSFLSGFISCVGSFILAVRL) traverse the membrane as a helical segment. The Cytoplasmic segment spans residues 74–92 (RIQINPQNKADFQGISPER). A helical transmembrane segment spans residues 93-113 (AFADFLFASTILHLVVMNFVG).

It belongs to the DAD/OST2 family. Component of the oligosaccharyltransferase (OST) complex. OST exists in two different complex forms which contain common core subunits RPN1, RPN2, OST48, OST4, DAD1 and TMEM258, either STT3A or STT3B as catalytic subunits, and form-specific accessory subunits. STT3A complex assembly occurs through the formation of 3 subcomplexes. Subcomplex 1 contains RPN1 and TMEM258, subcomplex 2 contains the STT3A-specific subunits STT3A, DC2/OSTC, and KCP2 as well as the core subunit OST4, and subcomplex 3 contains RPN2, DAD1, and OST48. The STT3A complex can form stable complexes with the Sec61 complex or with both the Sec61 and TRAP complexes.

It localises to the endoplasmic reticulum membrane. It participates in protein modification; protein glycosylation. Its function is as follows. Subunit of the oligosaccharyl transferase (OST) complex that catalyzes the initial transfer of a defined glycan (Glc(3)Man(9)GlcNAc(2) in eukaryotes) from the lipid carrier dolichol-pyrophosphate to an asparagine residue within an Asn-X-Ser/Thr consensus motif in nascent polypeptide chains, the first step in protein N-glycosylation. N-glycosylation occurs cotranslationally and the complex associates with the Sec61 complex at the channel-forming translocon complex that mediates protein translocation across the endoplasmic reticulum (ER). All subunits are required for a maximal enzyme activity. This chain is Dolichyl-diphosphooligosaccharide--protein glycosyltransferase subunit DAD1, found in Pongo abelii (Sumatran orangutan).